A 378-amino-acid chain; its full sequence is Carbamoyl phosphate synthase small chain (378 aa).

Positions 1-188 (MLPSFPPAIL…LGRGYGVQDK (188 aa)) are CPSase. L-glutamine-binding residues include Ser-50, Gly-240, and Gly-242. The Glutamine amidotransferase type-1 domain occupies 192-378 (HVVAYDFGVK…FTAAMAERKQ (187 aa)). Cys-268 acts as the Nucleophile in catalysis. L-glutamine-binding residues include Leu-269, Gln-272, Asn-310, Gly-312, and Phe-313. Catalysis depends on residues His-352 and Glu-354.

This sequence belongs to the CarA family. As to quaternary structure, composed of two chains; the small (or glutamine) chain promotes the hydrolysis of glutamine to ammonia, which is used by the large (or ammonia) chain to synthesize carbamoyl phosphate. Tetramer of heterodimers (alpha,beta)4.

The catalysed reaction is hydrogencarbonate + L-glutamine + 2 ATP + H2O = carbamoyl phosphate + L-glutamate + 2 ADP + phosphate + 2 H(+). The enzyme catalyses L-glutamine + H2O = L-glutamate + NH4(+). It functions in the pathway amino-acid biosynthesis; L-arginine biosynthesis; carbamoyl phosphate from bicarbonate: step 1/1. Its pathway is pyrimidine metabolism; UMP biosynthesis via de novo pathway; (S)-dihydroorotate from bicarbonate: step 1/3. Its function is as follows. Small subunit of the glutamine-dependent carbamoyl phosphate synthetase (CPSase). CPSase catalyzes the formation of carbamoyl phosphate from the ammonia moiety of glutamine, carbonate, and phosphate donated by ATP, constituting the first step of 2 biosynthetic pathways, one leading to arginine and/or urea and the other to pyrimidine nucleotides. The small subunit (glutamine amidotransferase) binds and cleaves glutamine to supply the large subunit with the substrate ammonia. In Ralstonia nicotianae (strain ATCC BAA-1114 / GMI1000) (Ralstonia solanacearum), this protein is Carbamoyl phosphate synthase small chain.